A 459-amino-acid polypeptide reads, in one-letter code: Putrescine aminotransferase (459 aa).

Pyridoxal 5'-phosphate contacts are provided by residues 150-151 (GT) and glutamine 274. The residue at position 300 (lysine 300) is an N6-(pyridoxal phosphate)lysine. Pyridoxal 5'-phosphate is bound at residue threonine 332.

This sequence belongs to the class-III pyridoxal-phosphate-dependent aminotransferase family. Putrescine aminotransferase subfamily. It depends on pyridoxal 5'-phosphate as a cofactor.

The catalysed reaction is an alkane-alpha,omega-diamine + 2-oxoglutarate = an omega-aminoaldehyde + L-glutamate. It catalyses the reaction putrescine + 2-oxoglutarate = 1-pyrroline + L-glutamate + H2O. It carries out the reaction cadaverine + 2-oxoglutarate = 5-aminopentanal + L-glutamate. Its pathway is amine and polyamine degradation; putrescine degradation; 4-aminobutanal from putrescine (transaminase route): step 1/1. In terms of biological role, catalyzes the aminotransferase reaction from putrescine to 2-oxoglutarate, leading to glutamate and 4-aminobutanal, which spontaneously cyclizes to form 1-pyrroline. This is the first step in one of two pathways for putrescine degradation, where putrescine is converted into 4-aminobutanoate (gamma-aminobutyrate or GABA) via 4-aminobutanal. Also functions as a cadaverine transaminase in a a L-lysine degradation pathway to succinate that proceeds via cadaverine, glutarate and L-2-hydroxyglutarate. The sequence is that of Putrescine aminotransferase from Klebsiella pneumoniae (strain 342).